Here is a 448-residue protein sequence, read N- to C-terminus: Chromogranin-A (448 aa).

The N-terminal stretch at 1 to 18 is a signal peptide; sequence MRSAVVLALLLCAGQVIA. A disulfide bridge links C35 with C56. Residues 116–251 form a disordered region; sequence LKEVTEEALS…AFNPHPSLSY (136 aa). Composition is skewed to basic and acidic residues over residues 129–139 and 158–175; these read AEARGDSKEVE and QESR…KEAI. A Phosphoserine modification is found at S197. The segment covering 205–222 has biased composition (basic and acidic residues); sequence VDREKGLGAERGQQAKRE. The span at 223–238 shows a compositional bias: acidic residues; it reads EEEDEAGEKADAEEEG. Phosphoserine is present on residues S258 and S288. A disordered region spans residues 263 to 429; it reads LVVDGARKTG…PEDQELESLS (167 aa). The residue at position 308 (G308) is a Glycine amide. The segment covering 310–350 has biased composition (basic and acidic residues); that stretch reads KSRELEQEKEQERLSKEWEDAKRWSKMDQLAKELTAEKRLE. Residues S311, S324, and S362 each carry the phosphoserine modification. At M363 the chain carries Methionine sulfoxide. Residues S389, S393, S415, and S429 each carry the phosphoserine modification. Residues 405–422 are compositionally biased toward basic and acidic residues; sequence YPEEKKEEEGSANRRPED. S415 carries an O-linked (Xyl...) (chondroitin sulfate) serine glycan.

Belongs to the chromogranin/secretogranin protein family. Self-interacts; self-assembly is promoted in vitro by chondroitin sulfate attachment which occurs at mildly acidic pH conditions. Interacts with SCG3. Interacts with ITPR1 in the secretory granules. In terms of processing, O-glycosylated; contains chondroitin sulfate (CS). CS attachment is pH-dependent, being observed at mildly acidic conditions of pH 5 but not at neutral pH, and promotes self-assembly in vitro. In terms of tissue distribution, highly expressed in adrenal medulla and pituitary gland. Weaker expression detected in cerebrum, cerebellum, spinal cord, liver, thyroid gland, striated muscle, lung, spleen, kidney, parotid gland, and sublingual gland.

The protein resides in the secreted. The protein localises to the cytoplasmic vesicle. Its subcellular location is the secretory vesicle. It localises to the neuronal dense core vesicle. Functionally, strongly inhibits glucose induced insulin release from the pancreas. In terms of biological role, inhibits catecholamine release from chromaffin cells and noradrenergic neurons by acting as a non-competitive nicotinic cholinergic antagonist. Can induce mast cell migration, degranulation and production of cytokines and chemokines. Regulates granule biogenesis in endocrine cells by up-regulating the transcription of protease nexin 1 (SERPINE2) via a cAMP-PKA-SP1 pathway. This leads to inhibition of granule protein degradation in the Golgi complex which in turn promotes granule formation. The polypeptide is Chromogranin-A (CHGA) (Equus caballus (Horse)).